We begin with the raw amino-acid sequence, 363 residues long: Fructose-bisphosphate aldolase C (363 aa).

Tyr-5 is subject to Phosphotyrosine. Ser-36, Ser-39, and Ser-45 each carry phosphoserine. A substrate-binding site is contributed by Arg-56. The residue at position 111 (Lys-111) is an N6-acetyllysine. A substrate-binding site is contributed by Lys-147. Catalysis depends on Glu-188, which acts as the Proton acceptor. The Schiff-base intermediate with dihydroxyacetone-P role is filled by Lys-230.

It belongs to the class I fructose-bisphosphate aldolase family. As to quaternary structure, homotetramer. Interacts with ATP6V1E1. Expressed exclusively in Purkinje cells in bands running from anterior to posterior across most of the cerebellum. Expressed at higher levels in the brains of BSE-infected animals.

The catalysed reaction is beta-D-fructose 1,6-bisphosphate = D-glyceraldehyde 3-phosphate + dihydroxyacetone phosphate. The protein operates within carbohydrate degradation; glycolysis; D-glyceraldehyde 3-phosphate and glycerone phosphate from D-glucose: step 4/4. The chain is Fructose-bisphosphate aldolase C (Aldoc) from Mus musculus (Mouse).